Here is a 292-residue protein sequence, read N- to C-terminus: Short chain dehydrogenase mpl6 (292 aa).

NADP(+)-binding residues include Val37, Asp95, Asn122, Arg156, Tyr188, Lys192, Val221, and Thr223. The Proton donor role is filled by Tyr188. The active-site Lowers pKa of active site Tyr is the Lys192.

It belongs to the short-chain dehydrogenases/reductases (SDR) family.

The protein operates within mycotoxin biosynthesis. Short chain dehydrogenase; part of the gene cluster that mediates the biosynthesis of the mycotoxin citrinin, a hepato-nephrotoxic compound to humans due to inhibition of respiration complex III. The pathway begins with the synthesis of a keto-aldehyde intermediate by the citrinin PKS (pksCT) from successive condensations of 4 malonyl-CoA units, presumably with a simple acetyl-CoA starter unit. Release of the keto-aldehyde intermediate is consistent with the presence of the C-terminal reductive release domain. Mp11 collaborates with pksCT by catalyzing the hydrolysis of ACP-bound acyl intermediates to free the ACP from stalled intermediates. Mpl2 then catalyzes the oxidation of the C-12 methyl of the ketone intermediate to an alcohol intermediate which is further oxidized by the oxidoreductase mpl7 to produce a bisaldehyde intermediate. The fourth catalytic step is catalyzed by the mpl4 aldehyde dehydrogenase. The final transformation is the reduction of C-3 by mpl6 to provide the chemically stable citrinin nucleus. This chain is Short chain dehydrogenase mpl6, found in Monascus purpureus (Red mold).